A 78-amino-acid chain; its full sequence is Large ribosomal subunit protein bL28 (78 aa).

The tract at residues 1–23 is disordered; sequence MSRVCQVTGKKPMVGNNRSHAKN.

The protein belongs to the bacterial ribosomal protein bL28 family.

The sequence is that of Large ribosomal subunit protein bL28 from Shewanella frigidimarina (strain NCIMB 400).